Reading from the N-terminus, the 466-residue chain is Ribulose bisphosphate carboxylase large chain (466 aa).

Lys-5 carries the N6,N6,N6-trimethyllysine modification. Residues Asn-114 and Thr-164 each contribute to the substrate site. Lys-166 acts as the Proton acceptor in catalysis. Lys-168 provides a ligand contact to substrate. Residues Lys-192, Asp-194, and Glu-195 each contribute to the Mg(2+) site. Lys-192 bears the N6-carboxylysine mark. Residue His-285 is the Proton acceptor of the active site. Arg-286, His-318, and Ser-370 together coordinate substrate.

It belongs to the RuBisCO large chain family. Type I subfamily. As to quaternary structure, heterohexadecamer of 8 large chains and 8 small chains. Requires Mg(2+) as cofactor.

The protein resides in the plastid. It is found in the chloroplast. The catalysed reaction is 2 (2R)-3-phosphoglycerate + 2 H(+) = D-ribulose 1,5-bisphosphate + CO2 + H2O. It catalyses the reaction D-ribulose 1,5-bisphosphate + O2 = 2-phosphoglycolate + (2R)-3-phosphoglycerate + 2 H(+). RuBisCO catalyzes two reactions: the carboxylation of D-ribulose 1,5-bisphosphate, the primary event in carbon dioxide fixation, as well as the oxidative fragmentation of the pentose substrate in the photorespiration process. Both reactions occur simultaneously and in competition at the same active site. This chain is Ribulose bisphosphate carboxylase large chain, found in Cornus kousa (Kousa dogwood).